The chain runs to 352 residues: Ly6/PLAUR domain-containing protein 3 (352 aa).

A signal peptide spans 1-32 (MDAARRGDTQPVMWTTRWLLLLPLLLCEGAQA). In terms of domain architecture, UPAR/Ly6 1 spans 35–128 (CYSCVQKADD…LNLTLRGLNP (94 aa)). N-linked (GlcNAc...) asparagine glycans are attached at residues Asn-120, Asn-131, Asn-178, and Asn-185. A UPAR/Ly6 2 domain is found at 142-224 (CYSCMGLSRE…GSCCQGPRCN (83 aa)). Residues 236-249 (RIPPLVLLPPPTTP) show a composition bias toward pro residues. A disordered region spans residues 236–330 (RIPPLVLLPP…KGGAQIPSKG (95 aa)). The span at 250-285 (APSTRTQNSSSTTSTTAPTTATTTIKPTTVQASHTS) shows a compositional bias: low complexity. Basic and acidic residues-rich tracts occupy residues 286 to 300 (STHE…EEGS) and 309 to 320 (HQDRSNMGKFPE). The GPI-anchor amidated glycine moiety is linked to residue Gly-330. Residues 331–352 (GSDALGSWLSAILLTVVAGAML) constitute a propeptide, removed in mature form.

As to quaternary structure, interacts with AGR2 and AGR3. Binds laminin-1 and laminin-5. Interacts with LGALS3. As to expression, found predominantly on the basal layers of squamous epithelium. Expressed in the gravid uterus and on epithelial of the upper gastrointestinal tract. It has been found in tumor lines which metastasize via the lymphatic system.

Its subcellular location is the cell membrane. Its function is as follows. Supports cell migration. May be involved in tumor progression. This chain is Ly6/PLAUR domain-containing protein 3 (Lypd3), found in Rattus norvegicus (Rat).